A 514-amino-acid chain; its full sequence is Endogenous retrovirus group PABLB member 1 Env polyprotein (514 aa).

N-linked (GlcNAc...) asparagine glycosylation is present at Asn-58. Positions 60-316 (STSNVFLQWA…YPYLPHVVNQ (257 aa)) are surface protein. The CXXC motif lies at 82–85 (CWVC). N-linked (GlcNAc...) asparagine glycans are attached at residues Asn-133, Asn-140, Asn-155, Asn-218, Asn-226, and Asn-267. The segment at 317–514 (GTRAIVHRND…QRDIFHSNAP (198 aa)) is transmembrane protein. The fusion peptide stretch occupies residues 328–348 (LPTIFMPSVGLGTVIQHIEAL). 2 N-linked (GlcNAc...) asparagine glycosylation sites follow: Asn-350 and Asn-357. The CKS-17 signature appears at 378 to 394 (LQNRMALDILTAAEGGT). A disulfide bond links Cys-395 and Cys-402. The short motif at 395–403 (CALIKTECC) is the CX6CC element. 2 N-linked (GlcNAc...) asparagine glycosylation sites follow: Asn-408 and Asn-412. Residues 452-472 (ILIVLATLWSVGIALCCGLYF) traverse the membrane as a helical segment.

It belongs to the gamma type-C retroviral envelope protein family. HERV class-I R(b) env subfamily. In terms of processing, the CXXC motif is highly conserved across a broad range of retroviral envelope proteins. It is thought to participate in the formation of a labile disulfide bond possibly with the CX6CC motif present in the transmembrane domain. As to expression, low expression in placenta and testis.

It is found in the cell membrane. Functionally, retroviral envelope proteins mediate receptor recognition and membrane fusion during early infection. Endogenous envelope proteins may have kept, lost or modified their original function during evolution. This endogenous envelope protein has lost its original fusogenic properties. The protein is Endogenous retrovirus group PABLB member 1 Env polyprotein (ERVPABLB-1) of Homo sapiens (Human).